The sequence spans 844 residues: Translation elongation factor 2 (844 aa).

Residues R17 to V348 enclose the tr-type G domain. A26–S33 contributes to the GTP binding site. A phosphothreonine mark is found at T57 and T59. Residues N162–D165 and S219–L221 contribute to the GTP site. Position 488 is a phosphoserine (S488). At H701 the chain carries Diphthamide.

Belongs to the TRAFAC class translation factor GTPase superfamily. Classic translation factor GTPase family. EF-G/EF-2 subfamily. In terms of processing, phosphorylation by EF-2 kinase completely inactivates EF-2.

It localises to the cytoplasm. It carries out the reaction GTP + H2O = GDP + phosphate + H(+). Functionally, catalyzes the GTP-dependent ribosomal translocation step during translation elongation. During this step, the ribosome changes from the pre-translocational (PRE) to the post-translocational (POST) state as the newly formed A-site-bound peptidyl-tRNA and P-site-bound deacylated tRNA move to the P and E sites, respectively. Catalyzes the coordinated movement of the two tRNA molecules, the mRNA and conformational changes in the ribosome. The chain is Translation elongation factor 2 from Bombyx mori (Silk moth).